A 147-amino-acid chain; its full sequence is UPF0260 protein PMI1174 (147 aa).

The protein belongs to the UPF0260 family.

This chain is UPF0260 protein PMI1174, found in Proteus mirabilis (strain HI4320).